The chain runs to 173 residues: Nicotinamide-nucleotide adenylyltransferase (173 aa).

Belongs to the archaeal NMN adenylyltransferase family.

Its subcellular location is the cytoplasm. The catalysed reaction is beta-nicotinamide D-ribonucleotide + ATP + H(+) = diphosphate + NAD(+). Its pathway is cofactor biosynthesis; NAD(+) biosynthesis; NAD(+) from nicotinamide D-ribonucleotide: step 1/1. The protein is Nicotinamide-nucleotide adenylyltransferase of Methanosarcina acetivorans (strain ATCC 35395 / DSM 2834 / JCM 12185 / C2A).